Here is a 468-residue protein sequence, read N- to C-terminus: 3-isopropylmalate dehydratase large subunit (468 aa).

Positions 346, 406, and 409 each coordinate [4Fe-4S] cluster.

The protein belongs to the aconitase/IPM isomerase family. LeuC type 1 subfamily. In terms of assembly, heterodimer of LeuC and LeuD. Requires [4Fe-4S] cluster as cofactor.

The catalysed reaction is (2R,3S)-3-isopropylmalate = (2S)-2-isopropylmalate. The protein operates within amino-acid biosynthesis; L-leucine biosynthesis; L-leucine from 3-methyl-2-oxobutanoate: step 2/4. In terms of biological role, catalyzes the isomerization between 2-isopropylmalate and 3-isopropylmalate, via the formation of 2-isopropylmaleate. In Pseudoalteromonas atlantica (strain T6c / ATCC BAA-1087), this protein is 3-isopropylmalate dehydratase large subunit.